The sequence spans 175 residues: Putative lipoprotein LppN (175 aa).

The signal sequence occupies residues 1 to 20 (MRLPGRHVLYALSAVTMLAA). A lipid anchor (N-palmitoyl cysteine) is attached at Cys21. Cys21 is lipidated: S-diacylglycerol cysteine. The segment at 31 to 56 (ASTNMNPTNPPATAETATVSPTPAPQ) is disordered. Residues 33 to 48 (TNMNPTNPPATAETAT) are compositionally biased toward low complexity.

The protein resides in the cell membrane. The sequence is that of Putative lipoprotein LppN (lppN) from Mycobacterium bovis (strain ATCC BAA-935 / AF2122/97).